The chain runs to 526 residues: MDVRFYPPPAQPAAAPAAPCLGPSPCLDPYYCNKFDGENMYMSMTEPSQDYVPASQSYPGPSLESEDFNIPPITPPSLPDHSLVHLNEVESGYHSLCHPMNHNGLLPFHPQTMDLPEITVSNMLGQDGALLSNSISVMQEIGNAEGAQYSSHPQMAAMRPRGQPTDIRQQASMMQPGQLTTINQSQLSAQLGLNMGGTNVAHNSPSPPGSKSATPSPSSSVHEDECEDASKINGGEKRPASDMGKKPKTPKKKKKKDPNEPQKPVSAYALFFRDTQAAIKGQNPNATFGEVSKIVASMWDGLGEEQKQVYKKKTEAAKKEYLKQLAAYRASLVSKSYTDPVDVKTSQPPQLVNSKPSVFHGPSQAHSALYLSSHYHQQPGMTPQLTAMHPSLPRNIAPKPNNQMPVTVSIANMAVSPPPPLQISPPLHQHLSMQQHQSLAMQQPLGSQLPMQVQTALHSPTMQQGFTLQPDYQTIINPTSTAAQVVTQAMEYVRSGCRNPPPQPVDWSTDYCSSGGMQRDKALYLT.

Residues 194-203 (NMGGTNVAHN) show a composition bias toward polar residues. Residues 194–264 (NMGGTNVAHN…KKDPNEPQKP (71 aa)) are disordered. Over residues 209 to 220 (GSKSATPSPSSS) the composition is skewed to low complexity. Over residues 228-245 (DASKINGGEKRPASDMGK) the composition is skewed to basic and acidic residues. Residues 237–256 (KRPASDMGKKPKTPKKKKKK) carry the Nuclear localization signal motif. Positions 246–256 (KPKTPKKKKKK) are enriched in basic residues. Positions 261 to 329 (PQKPVSAYAL…EYLKQLAAYR (69 aa)) form a DNA-binding region, HMG box.

Belongs to the high motility group (HMG) box superfamily. In terms of assembly, interacts with HBO1 complex composed at least of KAT7/HBO1, ING4, MEAF6, and JADE2; this complex is involved in histone acetylation. Interacts with DNMT1, LEO1, PAF1, SAP130 and SIN3A; these interactors regulate chromatin remodeling. Interacts with an array of proteins involved in RNA processing and translation and DNA replication. As to expression, expressed in neurons of the subventricular zone (at protein level). Expressed in distinct subpopulations of thymocytes undergoing positive selection: double CD4-positive CD8-positive (DP) cells, CD4-positive CD8-low transitional cells and in single CD4-positive and CD8-positive cells (at protein level). Expressed in ILC progenitors and mature ILC subsets: ILC1, ILC2 and ILC3 (at protein level). Expressed in lymphoid tissue-inducer cells and bone marrow NK cell subsets. Abundant in thymus, liver and brain. Also detected in small intestine, spleen, stomach and testis. Highly expressed in tumor-infiltrating CD8-positive T cells (at protein level).

The protein resides in the nucleus. In terms of biological role, transcriptional regulator with a major role in neural stem cell commitment and corticogenesis as well as in lymphoid cell development and lymphoid tissue organogenesis. Binds to GC-rich DNA sequences in the proximity of transcription start sites and may alter chromatin structure, modifying access of transcription factors to DNA. During cortical development, controls the neural stem cell pool by inhibiting the switch from proliferative to differentiating progenitors. Beyond progenitor cells, promotes neurite outgrowth in newborn neurons migrating to reach the cortical plate. May activate or repress critical genes for neural stem cell fate such as SOX2, EOMES and ROBO2. Plays an essential role in the development of lymphoid tissue-inducer (LTi) cells, a subset necessary for the formation of secondary lymphoid organs: peripheral lymph nodes and Peyer's patches. Acts as a developmental checkpoint and regulates thymocyte positive selection toward T cell lineage commitment. Required for the development of various T cell subsets, including CD4-positive helper T cells, CD8-positive cytotoxic T cells, regulatory T cells and CD1D-dependent natural killer T (NKT) cells. Required for the differentiation of common lymphoid progenitors (CMP) to innate lymphoid cells (ILC). May regulate the NOTCH-mediated gene program, promoting differentiation of the ILC lineage. Required at the progenitor phase of NK cell development in the bone marrow to specify NK cell lineage commitment. Upon chronic antigen stimulation, diverts T cell development by promoting the generation of exhaustive T cells, while suppressing effector and memory T cell programming. May regulate the expression of genes encoding inhibitory receptors such as PDCD1 and induce the exhaustion program, to prevent the overstimulation of T cells and activation-induced cell death. This is Thymocyte selection-associated high mobility group box protein TOX from Mus musculus (Mouse).